The following is a 295-amino-acid chain: MSLKHFIQITKPGIIFGNVLSVAGGFFLASKGHVDLAIFLAAMIGTSLVVASGCVFNNCIDRDIDLKMERTKNRVLVQGLISLEVALVYASILGVAGVALLYYVANPLAALFAVIGFVIYVGFYSLYLKRKSVHGTLVGSLSGAMPPVIGYVAVSNSFDMAALTLLVMFSLWQMPHSYAIAIFRFNDYLAASIPVLPVKRGIRVAKKHILLYILAFLVATLMLTFSGYAGMSYLAVAAAMGMYWLYMAWTGYKAVDDTVWARKLFVFSIFTITALSVMMSVDFKAPTELLLTYAH.

Transmembrane regions (helical) follow at residues 9-29 (ITKPGIIFGNVLSVAGGFFLA), 36-56 (LAIFLAAMIGTSLVVASGCVF), 85-105 (VALVYASILGVAGVALLYYVA), 108-128 (LAALFAVIGFVIYVGFYSLYL), 135-155 (GTLVGSLSGAMPPVIGYVAVS), 163-183 (LTLLVMFSLWQMPHSYAIAIF), 209-229 (ILLYILAFLVATLMLTFSGYA), 230-250 (GMSYLAVAAAMGMYWLYMAWT), and 263-283 (KLFVFSIFTITALSVMMSVDF).

This sequence belongs to the UbiA prenyltransferase family. Protoheme IX farnesyltransferase subfamily.

Its subcellular location is the cell inner membrane. It carries out the reaction heme b + (2E,6E)-farnesyl diphosphate + H2O = Fe(II)-heme o + diphosphate. The protein operates within porphyrin-containing compound metabolism; heme O biosynthesis; heme O from protoheme: step 1/1. Converts heme B (protoheme IX) to heme O by substitution of the vinyl group on carbon 2 of heme B porphyrin ring with a hydroxyethyl farnesyl side group. The chain is Protoheme IX farnesyltransferase 2 from Pseudomonas fluorescens (strain ATCC BAA-477 / NRRL B-23932 / Pf-5).